The chain runs to 390 residues: S-adenosylmethionine:tRNA ribosyltransferase-isomerase (390 aa).

The segment at M1–E22 is disordered.

Belongs to the QueA family. As to quaternary structure, monomer.

Its subcellular location is the cytoplasm. It catalyses the reaction 7-aminomethyl-7-carbaguanosine(34) in tRNA + S-adenosyl-L-methionine = epoxyqueuosine(34) in tRNA + adenine + L-methionine + 2 H(+). Its pathway is tRNA modification; tRNA-queuosine biosynthesis. Its function is as follows. Transfers and isomerizes the ribose moiety from AdoMet to the 7-aminomethyl group of 7-deazaguanine (preQ1-tRNA) to give epoxyqueuosine (oQ-tRNA). This chain is S-adenosylmethionine:tRNA ribosyltransferase-isomerase, found in Psychrobacter sp. (strain PRwf-1).